Reading from the N-terminus, the 49-residue chain is uncharacterized protein (49 aa).

Positions 1–22 (MKLNAFHLVVVVLIVSIFSVSS) are cleaved as a signal peptide.

The protein localises to the secreted. This is an uncharacterized protein from Dictyostelium discoideum (Social amoeba).